We begin with the raw amino-acid sequence, 257 residues long: NAD-capped RNA hydrolase NudC (257 aa).

Residue arginine 69 coordinates substrate. 2 residues coordinate Zn(2+): cysteine 98 and cysteine 101. Glutamate 111 is a binding site for substrate. Zn(2+) is bound by residues cysteine 116 and cysteine 119. Residue tyrosine 124 participates in substrate binding. The Nudix hydrolase domain maps to proline 125–threonine 248. Alanine 158, glutamate 174, and glutamate 178 together coordinate a divalent metal cation. A Nudix box motif is present at residues glycine 159–glycine 180. Glutamine 192–serine 199 is a substrate binding site. Position 219 (glutamate 219) interacts with a divalent metal cation. Alanine 241 serves as a coordination point for substrate.

This sequence belongs to the Nudix hydrolase family. NudC subfamily. In terms of assembly, homodimer. Requires Mg(2+) as cofactor. Mn(2+) is required as a cofactor. The cofactor is Zn(2+).

The catalysed reaction is a 5'-end NAD(+)-phospho-ribonucleoside in mRNA + H2O = a 5'-end phospho-adenosine-phospho-ribonucleoside in mRNA + beta-nicotinamide D-ribonucleotide + 2 H(+). It catalyses the reaction NAD(+) + H2O = beta-nicotinamide D-ribonucleotide + AMP + 2 H(+). The enzyme catalyses NADH + H2O = reduced beta-nicotinamide D-ribonucleotide + AMP + 2 H(+). In terms of biological role, mRNA decapping enzyme that specifically removes the nicotinamide adenine dinucleotide (NAD) cap from a subset of mRNAs by hydrolyzing the diphosphate linkage to produce nicotinamide mononucleotide (NMN) and 5' monophosphate mRNA. The NAD-cap is present at the 5'-end of some mRNAs and stabilizes RNA against 5'-processing. Has preference for mRNAs with a 5'-end purine. Catalyzes the hydrolysis of a broad range of dinucleotide pyrophosphates. This chain is NAD-capped RNA hydrolase NudC, found in Klebsiella pneumoniae (strain 342).